The primary structure comprises 141 residues: Large ribosomal subunit protein uL11 (141 aa).

This sequence belongs to the universal ribosomal protein uL11 family. As to quaternary structure, part of the ribosomal stalk of the 50S ribosomal subunit. Interacts with L10 and the large rRNA to form the base of the stalk. L10 forms an elongated spine to which L12 dimers bind in a sequential fashion forming a multimeric L10(L12)X complex. One or more lysine residues are methylated.

Its function is as follows. Forms part of the ribosomal stalk which helps the ribosome interact with GTP-bound translation factors. The sequence is that of Large ribosomal subunit protein uL11 from Clostridioides difficile (strain 630) (Peptoclostridium difficile).